The following is a 515-amino-acid chain: 2,3-bisphosphoglycerate-independent phosphoglycerate mutase (515 aa).

Mn(2+)-binding residues include aspartate 14 and serine 64. The active-site Phosphoserine intermediate is serine 64. Residues histidine 125, 155 to 156, arginine 187, arginine 193, 263 to 266, and lysine 337 contribute to the substrate site; these read RD and RADR. 5 residues coordinate Mn(2+): aspartate 404, histidine 408, aspartate 445, histidine 446, and histidine 464.

The protein belongs to the BPG-independent phosphoglycerate mutase family. As to quaternary structure, monomer. Mn(2+) serves as cofactor.

It carries out the reaction (2R)-2-phosphoglycerate = (2R)-3-phosphoglycerate. It participates in carbohydrate degradation; glycolysis; pyruvate from D-glyceraldehyde 3-phosphate: step 3/5. In terms of biological role, catalyzes the interconversion of 2-phosphoglycerate and 3-phosphoglycerate. The protein is 2,3-bisphosphoglycerate-independent phosphoglycerate mutase of Yersinia pseudotuberculosis serotype I (strain IP32953).